Here is a 138-residue protein sequence, read N- to C-terminus: Acidic phospholipase A2 Cvv-E6e (138 aa).

The N-terminal stretch at 1-16 (MRTLWILAVLLLGVEG) is a signal peptide. 7 cysteine pairs are disulfide-bonded: Cys-42/Cys-131, Cys-44/Cys-60, Cys-59/Cys-111, Cys-65/Cys-138, Cys-66/Cys-104, Cys-73/Cys-97, and Cys-91/Cys-102. Residues Tyr-43, Gly-45, and Gly-47 each coordinate Ca(2+). His-63 is an active-site residue. Asp-64 contributes to the Ca(2+) binding site. Residue Asp-105 is part of the active site.

Ca(2+) is required as a cofactor. Expressed by the venom gland.

It localises to the secreted. It catalyses the reaction a 1,2-diacyl-sn-glycero-3-phosphocholine + H2O = a 1-acyl-sn-glycero-3-phosphocholine + a fatty acid + H(+). Functionally, snake venom phospholipase A2 (PLA2) that significantly inhibits ADP-induced platelet aggregation in platelet-rich plasma of human, rabbit and guinea pig. PLA2 catalyzes the calcium-dependent hydrolysis of the 2-acyl groups in 3-sn-phosphoglycerides. This chain is Acidic phospholipase A2 Cvv-E6e, found in Crotalus viridis viridis (Prairie rattlesnake).